A 180-amino-acid polypeptide reads, in one-letter code: ATP-dependent protease subunit HslV (180 aa).

Thr7 is a catalytic residue. Positions 165, 168, and 171 each coordinate Na(+).

This sequence belongs to the peptidase T1B family. HslV subfamily. A double ring-shaped homohexamer of HslV is capped on each side by a ring-shaped HslU homohexamer. The assembly of the HslU/HslV complex is dependent on binding of ATP.

It is found in the cytoplasm. It catalyses the reaction ATP-dependent cleavage of peptide bonds with broad specificity.. Its activity is regulated as follows. Allosterically activated by HslU binding. Its function is as follows. Protease subunit of a proteasome-like degradation complex believed to be a general protein degrading machinery. This chain is ATP-dependent protease subunit HslV, found in Bacillus cereus (strain G9842).